The primary structure comprises 183 residues: Peptide deformylase (183 aa).

Positions 111 and 154 each coordinate Fe cation. The active site involves Glu155. Position 158 (His158) interacts with Fe cation.

Belongs to the polypeptide deformylase family. Fe(2+) is required as a cofactor.

The catalysed reaction is N-terminal N-formyl-L-methionyl-[peptide] + H2O = N-terminal L-methionyl-[peptide] + formate. Removes the formyl group from the N-terminal Met of newly synthesized proteins. Requires at least a dipeptide for an efficient rate of reaction. N-terminal L-methionine is a prerequisite for activity but the enzyme has broad specificity at other positions. This is Peptide deformylase from Staphylococcus epidermidis (strain ATCC 35984 / DSM 28319 / BCRC 17069 / CCUG 31568 / BM 3577 / RP62A).